A 562-amino-acid chain; its full sequence is NAD-dependent malic enzyme (562 aa).

Tyr101 serves as the catalytic Proton donor. An NAD(+)-binding site is contributed by Arg154. The active-site Proton acceptor is Lys172. 3 residues coordinate a divalent metal cation: Glu243, Asp244, and Asp267. 2 residues coordinate NAD(+): Asp267 and Asn415.

This sequence belongs to the malic enzymes family. Homotetramer. The cofactor is Mg(2+). Requires Mn(2+) as cofactor.

It carries out the reaction (S)-malate + NAD(+) = pyruvate + CO2 + NADH. The enzyme catalyses oxaloacetate + H(+) = pyruvate + CO2. The protein is NAD-dependent malic enzyme of Shewanella baltica (strain OS155 / ATCC BAA-1091).